The chain runs to 114 residues: Ribonuclease P protein component (114 aa).

Belongs to the RnpA family. Consists of a catalytic RNA component (M1 or rnpB) and a protein subunit.

It catalyses the reaction Endonucleolytic cleavage of RNA, removing 5'-extranucleotides from tRNA precursor.. Its function is as follows. RNaseP catalyzes the removal of the 5'-leader sequence from pre-tRNA to produce the mature 5'-terminus. It can also cleave other RNA substrates such as 4.5S RNA. The protein component plays an auxiliary but essential role in vivo by binding to the 5'-leader sequence and broadening the substrate specificity of the ribozyme. The sequence is that of Ribonuclease P protein component from Borrelia hermsii (strain HS1 / DAH).